Reading from the N-terminus, the 236-residue chain is Small ribosomal subunit protein uS3 (236 aa).

In terms of domain architecture, KH type-2 spans 39 to 107 (IRKFLKREMY…EVFINIKEAK (69 aa)). Basic and acidic residues predominate over residues 214 to 229 (PEKKEESKSGDKEVRS). The tract at residues 214–236 (PEKKEESKSGDKEVRSKSRRGRQ) is disordered.

It belongs to the universal ribosomal protein uS3 family. Part of the 30S ribosomal subunit. Forms a tight complex with proteins S10 and S14.

In terms of biological role, binds the lower part of the 30S subunit head. Binds mRNA in the 70S ribosome, positioning it for translation. This Helicobacter hepaticus (strain ATCC 51449 / 3B1) protein is Small ribosomal subunit protein uS3.